The following is a 124-amino-acid chain: Small ribosomal subunit protein uS12 (124 aa).

Asp-89 is subject to 3-methylthioaspartic acid.

Belongs to the universal ribosomal protein uS12 family. In terms of assembly, part of the 30S ribosomal subunit. Contacts proteins S8 and S17. May interact with IF1 in the 30S initiation complex.

In terms of biological role, with S4 and S5 plays an important role in translational accuracy. Its function is as follows. Interacts with and stabilizes bases of the 16S rRNA that are involved in tRNA selection in the A site and with the mRNA backbone. Located at the interface of the 30S and 50S subunits, it traverses the body of the 30S subunit contacting proteins on the other side and probably holding the rRNA structure together. The combined cluster of proteins S8, S12 and S17 appears to hold together the shoulder and platform of the 30S subunit. The chain is Small ribosomal subunit protein uS12 from Shewanella sp. (strain ANA-3).